We begin with the raw amino-acid sequence, 384 residues long: Chaperone protein DnaJ 1 (384 aa).

The J domain maps to 4–68; that stretch reads DYYGLLGVAR…EKRRIVDMGG (65 aa). A CR-type zinc finger spans residues 133 to 215; it reads GVTKHLTVDT…CGGDGRVRAR (83 aa). The Zn(2+) site is built by Cys146, Cys149, Cys163, Cys166, Cys189, Cys192, Cys203, and Cys206. CXXCXGXG motif repeat units lie at residues 146–153, 163–170, 189–196, and 203–210; these read CDACHGSG, CETCGGAG, CPTCRGAG, and CHKCGGDG.

The protein belongs to the DnaJ family. In terms of assembly, homodimer. Zn(2+) is required as a cofactor.

The protein localises to the cytoplasm. Functionally, participates actively in the response to hyperosmotic and heat shock by preventing the aggregation of stress-denatured proteins and by disaggregating proteins, also in an autonomous, DnaK-independent fashion. Unfolded proteins bind initially to DnaJ; upon interaction with the DnaJ-bound protein, DnaK hydrolyzes its bound ATP, resulting in the formation of a stable complex. GrpE releases ADP from DnaK; ATP binding to DnaK triggers the release of the substrate protein, thus completing the reaction cycle. Several rounds of ATP-dependent interactions between DnaJ, DnaK and GrpE are required for fully efficient folding. Also involved, together with DnaK and GrpE, in the DNA replication of plasmids through activation of initiation proteins. The protein is Chaperone protein DnaJ 1 of Nocardia farcinica (strain IFM 10152).